The primary structure comprises 167 residues: Putative universal stress protein SSP1056 (167 aa).

Belongs to the universal stress protein A family.

The protein resides in the cytoplasm. This chain is Putative universal stress protein SSP1056, found in Staphylococcus saprophyticus subsp. saprophyticus (strain ATCC 15305 / DSM 20229 / NCIMB 8711 / NCTC 7292 / S-41).